Here is a 235-residue protein sequence, read N- to C-terminus: Orotidine 5'-phosphate decarboxylase (235 aa).

Substrate contacts are provided by residues Asp17, Lys39, 66-75 (DLKLHDIGNT), Thr121, Arg182, Gln191, Gly211, and Arg212. The active-site Proton donor is the Lys68.

This sequence belongs to the OMP decarboxylase family. Type 1 subfamily. Homodimer.

The enzyme catalyses orotidine 5'-phosphate + H(+) = UMP + CO2. It participates in pyrimidine metabolism; UMP biosynthesis via de novo pathway; UMP from orotate: step 2/2. Functionally, catalyzes the decarboxylation of orotidine 5'-monophosphate (OMP) to uridine 5'-monophosphate (UMP). In Rhodopseudomonas palustris (strain HaA2), this protein is Orotidine 5'-phosphate decarboxylase.